The primary structure comprises 360 residues: uncharacterized protein (360 aa).

The span at 22 to 32 (EEDVEPNEEAE) shows a compositional bias: acidic residues. The segment at 22-55 (EEDVEPNEEAEGPGGVHKKRRGARKKNRRQRMEG) is disordered. A compositionally biased stretch (basic residues) spans 37 to 50 (VHKKRRGARKKNRR).

This is an uncharacterized protein from Caenorhabditis elegans.